We begin with the raw amino-acid sequence, 405 residues long: Serpin H1 (405 aa).

The first 15 residues, 1–15 (MQIFLVLALCGLAAA), serve as a signal peptide directing secretion. 2 N-linked (GlcNAc...) asparagine glycosylation sites follow: Asn107 and Asn112. Positions 402–405 (RDEL) match the Prevents secretion from ER motif.

The protein belongs to the serpin family.

It is found in the endoplasmic reticulum lumen. Binds specifically to collagen. Could be involved as a chaperone in the biosynthetic pathway of collagen. This chain is Serpin H1 (SERPINH1), found in Gallus gallus (Chicken).